We begin with the raw amino-acid sequence, 376 residues long: N-acetyldiaminopimelate deacetylase (376 aa).

Residue D69 is part of the active site. E128 serves as the catalytic Proton acceptor.

It belongs to the peptidase M20A family. N-acetyldiaminopimelate deacetylase subfamily.

It carries out the reaction N-acetyl-(2S,6S)-2,6-diaminopimelate + H2O = (2S,6S)-2,6-diaminopimelate + acetate. It functions in the pathway amino-acid biosynthesis; L-lysine biosynthesis via DAP pathway; LL-2,6-diaminopimelate from (S)-tetrahydrodipicolinate (acetylase route): step 3/3. Its function is as follows. Catalyzes the conversion of N-acetyl-diaminopimelate to diaminopimelate and acetate. This Bacillus cereus (strain 03BB102) protein is N-acetyldiaminopimelate deacetylase.